The primary structure comprises 744 residues: Putative pre-mRNA-splicing factor ATP-dependent RNA helicase DHX32 (744 aa).

M1 carries the post-translational modification N-acetylmethionine. The disordered stretch occupies residues 1 to 28 (MDEEELDHPNASPEKRYFPESLDSSDGD). One can recognise a Helicase ATP-binding domain in the interval 72–270 (MESLLQNQVV…RLIFEIHRSG (199 aa)). 85-92 (GDSKCGKS) provides a ligand contact to ATP. The DEAH box motif lies at 185–188 (DDVH). The Helicase C-terminal domain occupies 258-438 (SVIRLIFEIH…SMVLFMKRVD (181 aa)).

Belongs to the DEAD box helicase family. DEAH subfamily.

It is found in the nucleus. The protein localises to the mitochondrion. It catalyses the reaction ATP + H2O = ADP + phosphate + H(+). This is Putative pre-mRNA-splicing factor ATP-dependent RNA helicase DHX32 (Dhx32) from Mus musculus (Mouse).